Here is an 89-residue protein sequence, read N- to C-terminus: Small ribosomal subunit protein uS14A (89 aa).

It belongs to the universal ribosomal protein uS14 family. Part of the 30S ribosomal subunit. Contacts proteins S3 and S10.

Its function is as follows. Binds 16S rRNA, required for the assembly of 30S particles and may also be responsible for determining the conformation of the 16S rRNA at the A site. This chain is Small ribosomal subunit protein uS14A, found in Lacticaseibacillus paracasei (strain ATCC 334 / BCRC 17002 / CCUG 31169 / CIP 107868 / KCTC 3260 / NRRL B-441) (Lactobacillus paracasei).